The chain runs to 315 residues: MMWENWTIVSEFVLVSFSALSTELQALLFLLFLTIYLVTLMGNVLIILVTIADSALQSPMYFFLRNLSFLEIGFNLVIVPKMLGTLIIQDTTISFLGCATQMYFFFFFGAAECCLLATMAYDRYVAICDPLHYPVIMGHISCAQLAAASWFSGFSVATVQTTWIFSFPFCGPNRVNHFFCDSPPVIALVCADTSVFELEALTATVLFILFPFLLILGSYVRILSTIFRMPSAEGKHQAFSTCSAHLLVVSLFYSTAILTYFRPQSSASSESKKLLSLSSTVVTPMLNPIIYSSRNKEVKAALKRLIHRTLGSQKL.

At Met-1–Ala-26 the chain is on the extracellular side. A glycan (N-linked (GlcNAc...) asparagine) is linked at Asn-5. A helical membrane pass occupies residues Leu-27–Ile-47. At Leu-48–Ala-55 the chain is on the cytoplasmic side. Residues Leu-56–Leu-76 form a helical membrane-spanning segment. Residues Val-77–Thr-100 are Extracellular-facing. Cysteines 98 and 190 form a disulfide. A helical transmembrane segment spans residues Gln-101–Tyr-121. Over Asp-122–Ile-140 the chain is Cytoplasmic. The chain crosses the membrane as a helical span at residues Ser-141–Thr-161. The Extracellular portion of the chain corresponds to Thr-162 to Leu-198. The helical transmembrane segment at Glu-199–Ser-218 threads the bilayer. Residues Tyr-219–Ala-238 lie on the Cytoplasmic side of the membrane. A helical transmembrane segment spans residues Phe-239–Thr-259. At Tyr-260–Lys-272 the chain is on the extracellular side. A helical membrane pass occupies residues Lys-273 to Ser-293. The Cytoplasmic segment spans residues Arg-294–Leu-315.

Belongs to the G-protein coupled receptor 1 family. In terms of tissue distribution, expressed in the tongue.

It is found in the cell membrane. In terms of biological role, odorant receptor (Potential). May be involved in taste perception. The sequence is that of Olfactory receptor 10A4 (OR10A4) from Homo sapiens (Human).